We begin with the raw amino-acid sequence, 269 residues long: MTHIPGIVITGASGRMGQMLVRTVTDSDKVRLVGALERPGHDWIGRDVGEAMGGQALGVAVTDDPLEAFAQAQAVIDFTAPAATLGFAALAAQARCVHVIGTTGMTAEQIAALEPAARHAVIVRAGNMSLGVNLLVQLTKKVAAALDEDFDIEVIEAHHHHKVDAPSGTALMLGEAAAEGRGVRLDDVADRARDGITGARTRGDIGFHAIRGGDIVGEHDVLFAAPGERIVLRHVASDRAVFARGALKAALWGQGKAPGHYDMVDVLGL.

Residues 11-16 and Glu37 each bind NAD(+); that span reads GASGRM. Arg38 contributes to the NADP(+) binding site. NAD(+) contacts are provided by residues 101–103 and 125–128; these read GTT and AGNM. Residue His158 is the Proton donor/acceptor of the active site. Residue His159 coordinates (S)-2,3,4,5-tetrahydrodipicolinate. Catalysis depends on Lys162, which acts as the Proton donor. 168–169 serves as a coordination point for (S)-2,3,4,5-tetrahydrodipicolinate; it reads GT.

This sequence belongs to the DapB family.

The protein resides in the cytoplasm. It catalyses the reaction (S)-2,3,4,5-tetrahydrodipicolinate + NAD(+) + H2O = (2S,4S)-4-hydroxy-2,3,4,5-tetrahydrodipicolinate + NADH + H(+). It carries out the reaction (S)-2,3,4,5-tetrahydrodipicolinate + NADP(+) + H2O = (2S,4S)-4-hydroxy-2,3,4,5-tetrahydrodipicolinate + NADPH + H(+). It functions in the pathway amino-acid biosynthesis; L-lysine biosynthesis via DAP pathway; (S)-tetrahydrodipicolinate from L-aspartate: step 4/4. Its function is as follows. Catalyzes the conversion of 4-hydroxy-tetrahydrodipicolinate (HTPA) to tetrahydrodipicolinate. This chain is 4-hydroxy-tetrahydrodipicolinate reductase, found in Ruegeria pomeroyi (strain ATCC 700808 / DSM 15171 / DSS-3) (Silicibacter pomeroyi).